The sequence spans 545 residues: T-complex protein 1 subunit gamma (545 aa).

Met-1 bears the N-acetylmethionine mark. A disordered region spans residues 1–24; it reads MMGHRPVLVLSQNTKRESGRKVQS. The residue at position 11 (Ser-11) is a Phosphoserine. Lys-15 participates in a covalent cross-link: Glycyl lysine isopeptide (Lys-Gly) (interchain with G-Cter in SUMO2). Gly-42 lines the ADP pocket. Gly-42 lines the ATP pocket. Asp-93 is a Mg(2+) binding site. Positions 94, 95, 96, 97, 162, and 163 each coordinate ADP. 3 residues coordinate ATP: Gly-94, Thr-95, and Thr-96. Ser-170 carries the phosphoserine modification. The residue at position 222 (Lys-222) is an N6-acetyllysine. 2 positions are modified to phosphoserine: Ser-243 and Ser-244. Tyr-247 is subject to Phosphotyrosine. Glycyl lysine isopeptide (Lys-Gly) (interchain with G-Cter in SUMO2) cross-links involve residues Lys-248 and Lys-249. Phosphoserine is present on Ser-252. Cys-366 and Cys-372 are oxidised to a cystine. Residue Lys-381 forms a Glycyl lysine isopeptide (Lys-Gly) (interchain with G-Cter in SUMO2) linkage. Residue Gly-411 coordinates ADP. Gly-411 is an ATP binding site. 2 positions are modified to phosphothreonine: Thr-430 and Thr-459. Residues Gly-482, Glu-483, Glu-497, and Lys-502 each contribute to the ADP site. Gly-482 serves as a coordination point for ATP. Glu-497 lines the ATP pocket. The tract at residues 526-545 is disordered; that stretch reads HKKKGDDQNRQTGAPDAGQE.

This sequence belongs to the TCP-1 chaperonin family. As to quaternary structure, component of the chaperonin-containing T-complex (TRiC), a hexadecamer composed of two identical back-to-back stacked rings enclosing a protein folding chamber. Each ring is made up of eight different subunits: TCP1/CCT1, CCT2, CCT3, CCT4, CCT5, CCT6A/CCT6, CCT7, CCT8. Interacts with PACRG. Interacts with DNAAF4. Interacts with DLEC1.

Its subcellular location is the cytoplasm. The enzyme catalyses ATP + H2O = ADP + phosphate + H(+). Component of the chaperonin-containing T-complex (TRiC), a molecular chaperone complex that assists the folding of actin, tubulin and other proteins upon ATP hydrolysis. The TRiC complex mediates the folding of WRAP53/TCAB1, thereby regulating telomere maintenance. As part of the TRiC complex may play a role in the assembly of BBSome, a complex involved in ciliogenesis regulating transports vesicles to the cilia. The polypeptide is T-complex protein 1 subunit gamma (Cct3) (Rattus norvegicus (Rat)).